The following is a 468-amino-acid chain: Glutamate--tRNA ligase 2 (468 aa).

A 'HIGH' region motif is present at residues 11–21; the sequence is PSPTGFLHIGG. The 'KMSKS' region motif lies at 239 to 243; it reads KLSKR. Lys-242 serves as a coordination point for ATP.

Belongs to the class-I aminoacyl-tRNA synthetase family. Glutamate--tRNA ligase type 1 subfamily. Monomer.

It localises to the cytoplasm. The catalysed reaction is tRNA(Glu) + L-glutamate + ATP = L-glutamyl-tRNA(Glu) + AMP + diphosphate. In terms of biological role, catalyzes the attachment of glutamate to tRNA(Glu) in a two-step reaction: glutamate is first activated by ATP to form Glu-AMP and then transferred to the acceptor end of tRNA(Glu). This chain is Glutamate--tRNA ligase 2, found in Ruegeria pomeroyi (strain ATCC 700808 / DSM 15171 / DSS-3) (Silicibacter pomeroyi).